Reading from the N-terminus, the 188-residue chain is Adenine phosphoribosyltransferase (188 aa).

The protein belongs to the purine/pyrimidine phosphoribosyltransferase family. In terms of assembly, homodimer.

The protein resides in the cytoplasm. It catalyses the reaction AMP + diphosphate = 5-phospho-alpha-D-ribose 1-diphosphate + adenine. It functions in the pathway purine metabolism; AMP biosynthesis via salvage pathway; AMP from adenine: step 1/1. Its function is as follows. Catalyzes a salvage reaction resulting in the formation of AMP, that is energically less costly than de novo synthesis. The polypeptide is Adenine phosphoribosyltransferase (Salinispora arenicola (strain CNS-205)).